The primary structure comprises 573 residues: DNA ligase (573 aa).

Glutamate 250 provides a ligand contact to ATP. Lysine 252 functions as the N6-AMP-lysine intermediate in the catalytic mechanism. ATP-binding residues include arginine 257, arginine 272, glutamate 301, phenylalanine 342, arginine 432, and lysine 438.

Belongs to the ATP-dependent DNA ligase family. Mg(2+) is required as a cofactor.

The catalysed reaction is ATP + (deoxyribonucleotide)n-3'-hydroxyl + 5'-phospho-(deoxyribonucleotide)m = (deoxyribonucleotide)n+m + AMP + diphosphate.. In terms of biological role, DNA ligase that seals nicks in double-stranded DNA during DNA replication, DNA recombination and DNA repair. This chain is DNA ligase, found in Methanococcus maripaludis (strain C7 / ATCC BAA-1331).